The following is a 280-amino-acid chain: Transcription factor MYB60 (280 aa).

HTH myb-type domains lie at Lys-9 to Ile-65 and Lys-66 to Leu-116. 2 DNA-binding regions (H-T-H motif) span residues Trp-37–Leu-61 and Trp-89–Leu-112. Residues Cys-49 and Cys-53 each carry the S-nitrosocysteine modification. A compositionally biased stretch (basic and acidic residues) spans Lys-118–Ser-127. Disordered regions lie at residues Lys-118 to Ser-149 and Glu-204 to Pro-247. Positions Glu-128–Ser-149 are enriched in polar residues.

In terms of tissue distribution, specifically expressed in guard cells. Present in seedlings, leaves, stems and flowers.

Its subcellular location is the nucleus. Transcription factor involved in the regulation of gene (e.g. drought-regulated and flavonoid biosynthetic genes) expression and stomatal movements leading to negative regulation of responses to drought and responses to other physiological stimuli (e.g. light). Promotes guard cell deflation in response to water deficit. Triggers root growth upon osmotic stress (e.g. mannitol containing medium). The sequence is that of Transcription factor MYB60 from Arabidopsis thaliana (Mouse-ear cress).